Here is a 424-residue protein sequence, read N- to C-terminus: Enolase (424 aa).

Gln163 is a (2R)-2-phosphoglycerate binding site. Glu204 functions as the Proton donor in the catalytic mechanism. Asp241, Glu284, and Asp311 together coordinate Mg(2+). 4 residues coordinate (2R)-2-phosphoglycerate: Lys336, Arg365, Ser366, and Lys387. The active-site Proton acceptor is Lys336.

The protein belongs to the enolase family. Mg(2+) serves as cofactor.

The protein resides in the cytoplasm. It is found in the secreted. The protein localises to the cell surface. The catalysed reaction is (2R)-2-phosphoglycerate = phosphoenolpyruvate + H2O. It functions in the pathway carbohydrate degradation; glycolysis; pyruvate from D-glyceraldehyde 3-phosphate: step 4/5. Functionally, catalyzes the reversible conversion of 2-phosphoglycerate (2-PG) into phosphoenolpyruvate (PEP). It is essential for the degradation of carbohydrates via glycolysis. In Dictyoglomus thermophilum (strain ATCC 35947 / DSM 3960 / H-6-12), this protein is Enolase.